A 386-amino-acid polypeptide reads, in one-letter code: 2-isopropylmalate synthase (386 aa).

The 254-residue stretch at 12–265 folds into the Pyruvate carboxyltransferase domain; it reads VRIFDTTLRD…DVGVRTYLLY (254 aa). Aspartate 21, histidine 203, histidine 205, and asparagine 239 together coordinate a divalent metal cation.

Belongs to the alpha-IPM synthase/homocitrate synthase family. Homodimer. The cofactor is a divalent metal cation.

It catalyses the reaction 3-methyl-2-oxobutanoate + acetyl-CoA + H2O = (2S)-2-isopropylmalate + CoA + H(+). The protein operates within amino-acid biosynthesis; L-leucine biosynthesis; L-leucine from 3-methyl-2-oxobutanoate: step 1/4. With respect to regulation, is not inhibited by leucine. Its function is as follows. Catalyzes the condensation of the acetyl group of acetyl-CoA with 3-methyl-2-oxobutanoate (2-oxoisovalerate) to form 3-carboxy-3-hydroxy-4-methylpentanoate (2-isopropylmalate). Carries out the first step of the leucine biosynthesis pathway. Also displays a low citramalate synthase activity, using pyruvate as substrate, but is unable to use 2-oxoglutarate. This chain is 2-isopropylmalate synthase, found in Sulfolobus acidocaldarius (strain ATCC 33909 / DSM 639 / JCM 8929 / NBRC 15157 / NCIMB 11770).